A 165-amino-acid polypeptide reads, in one-letter code: Large ribosomal subunit protein uL10 (165 aa).

It belongs to the universal ribosomal protein uL10 family. In terms of assembly, part of the ribosomal stalk of the 50S ribosomal subunit. The N-terminus interacts with L11 and the large rRNA to form the base of the stalk. The C-terminus forms an elongated spine to which L12 dimers bind in a sequential fashion forming a multimeric L10(L12)X complex.

Its function is as follows. Forms part of the ribosomal stalk, playing a central role in the interaction of the ribosome with GTP-bound translation factors. This Halalkalibacterium halodurans (strain ATCC BAA-125 / DSM 18197 / FERM 7344 / JCM 9153 / C-125) (Bacillus halodurans) protein is Large ribosomal subunit protein uL10 (rplJ).